Consider the following 804-residue polypeptide: Leucine--tRNA ligase (804 aa).

The 'HIGH' region signature appears at 40-51 (PYPSGAGLHVGH). The short motif at 576–580 (KMSKS) is the 'KMSKS' region element. Position 579 (Lys579) interacts with ATP.

The protein belongs to the class-I aminoacyl-tRNA synthetase family.

The protein localises to the cytoplasm. The catalysed reaction is tRNA(Leu) + L-leucine + ATP = L-leucyl-tRNA(Leu) + AMP + diphosphate. In Bacillus velezensis (strain DSM 23117 / BGSC 10A6 / LMG 26770 / FZB42) (Bacillus amyloliquefaciens subsp. plantarum), this protein is Leucine--tRNA ligase.